Here is a 127-residue protein sequence, read N- to C-terminus: NADPH-dependent 7-cyano-7-deazaguanine reductase (127 aa).

The active-site Thioimide intermediate is Cys40. Asp47 functions as the Proton donor in the catalytic mechanism. Residues 62 to 64 (VEL) and 81 to 82 (HE) contribute to the substrate site.

The protein belongs to the GTP cyclohydrolase I family. QueF type 1 subfamily.

The protein localises to the cytoplasm. The enzyme catalyses 7-aminomethyl-7-carbaguanine + 2 NADP(+) = 7-cyano-7-deazaguanine + 2 NADPH + 3 H(+). It participates in tRNA modification; tRNA-queuosine biosynthesis. In terms of biological role, catalyzes the NADPH-dependent reduction of 7-cyano-7-deazaguanine (preQ0) to 7-aminomethyl-7-deazaguanine (preQ1). The chain is NADPH-dependent 7-cyano-7-deazaguanine reductase from Campylobacter jejuni subsp. jejuni serotype O:2 (strain ATCC 700819 / NCTC 11168).